Here is a 127-residue protein sequence, read N- to C-terminus: Large ribosomal subunit protein uL24A (127 aa).

Belongs to the universal ribosomal protein uL24 family. In terms of assembly, component of the large ribosomal subunit (LSU). Mature yeast ribosomes consist of a small (40S) and a large (60S) subunit. The 40S small subunit contains 1 molecule of ribosomal RNA (18S rRNA) and 33 different proteins (encoded by 57 genes). The large 60S subunit contains 3 rRNA molecules (25S, 5.8S and 5S rRNA) and 46 different proteins (encoded by 81 genes).

Its subcellular location is the cytoplasm. Its function is as follows. Component of the ribosome, a large ribonucleoprotein complex responsible for the synthesis of proteins in the cell. The small ribosomal subunit (SSU) binds messenger RNAs (mRNAs) and translates the encoded message by selecting cognate aminoacyl-transfer RNA (tRNA) molecules. The large subunit (LSU) contains the ribosomal catalytic site termed the peptidyl transferase center (PTC), which catalyzes the formation of peptide bonds, thereby polymerizing the amino acids delivered by tRNAs into a polypeptide chain. The nascent polypeptides leave the ribosome through a tunnel in the LSU and interact with protein factors that function in enzymatic processing, targeting, and the membrane insertion of nascent chains at the exit of the ribosomal tunnel. The sequence is that of Large ribosomal subunit protein uL24A from Saccharomyces cerevisiae (strain ATCC 204508 / S288c) (Baker's yeast).